Reading from the N-terminus, the 395-residue chain is Elongation factor Tu (395 aa).

Positions 10–204 (KPHVNIGTIG…AVDSYIPTPE (195 aa)) constitute a tr-type G domain. Residues 19-26 (GHVDHGKT) form a G1 region. 19 to 26 (GHVDHGKT) lines the GTP pocket. Residue Thr26 participates in Mg(2+) binding. The tract at residues 60–64 (GITIS) is G2. The G3 stretch occupies residues 81–84 (DCPG). GTP contacts are provided by residues 81–85 (DCPGH) and 136–139 (NKCD). The interval 136–139 (NKCD) is G4. The G5 stretch occupies residues 174 to 176 (SAL).

The protein belongs to the TRAFAC class translation factor GTPase superfamily. Classic translation factor GTPase family. EF-Tu/EF-1A subfamily. As to quaternary structure, monomer. In terms of processing, phosphorylated on serine and/or threonine residue(s). Dephosphorylated by stp.

The protein resides in the cytoplasm. It catalyses the reaction GTP + H2O = GDP + phosphate + H(+). Its function is as follows. GTP hydrolase that promotes the GTP-dependent binding of aminoacyl-tRNA to the A-site of ribosomes during protein biosynthesis. The protein is Elongation factor Tu of Listeria innocua serovar 6a (strain ATCC BAA-680 / CLIP 11262).